A 126-amino-acid chain; its full sequence is DNA-directed RNA polymerase subunit omega (126 aa).

It belongs to the RNA polymerase subunit omega family. In terms of assembly, the RNAP catalytic core consists of 2 alpha, 1 beta, 1 beta' and 1 omega subunit. When a sigma factor is associated with the core the holoenzyme is formed, which can initiate transcription.

The catalysed reaction is RNA(n) + a ribonucleoside 5'-triphosphate = RNA(n+1) + diphosphate. Promotes RNA polymerase assembly. Latches the N- and C-terminal regions of the beta' subunit thereby facilitating its interaction with the beta and alpha subunits. The chain is DNA-directed RNA polymerase subunit omega from Rickettsia bellii (strain OSU 85-389).